A 413-amino-acid polypeptide reads, in one-letter code: Elongation factor 1-alpha (413 aa).

Positions 5-211 (KEHMNLAFIG…DDLEAPEKPV (207 aa)) constitute a tr-type G domain. The G1 stretch occupies residues 14-21 (GHVDHGKS). 14-21 (GHVDHGKS) provides a ligand contact to GTP. Ser-21 serves as a coordination point for Mg(2+). The G2 stretch occupies residues 60–64 (GVTID). A G3 region spans residues 81 to 84 (DCPG). GTP is bound by residues 81 to 85 (DCPGH) and 136 to 139 (NKMD). The interval 136-139 (NKMD) is G4. Residues 175-177 (SAF) are G5.

This sequence belongs to the TRAFAC class translation factor GTPase superfamily. Classic translation factor GTPase family. EF-Tu/EF-1A subfamily.

Its subcellular location is the cytoplasm. The catalysed reaction is GTP + H2O = GDP + phosphate + H(+). Functionally, GTP hydrolase that promotes the GTP-dependent binding of aminoacyl-tRNA to the A-site of ribosomes during protein biosynthesis. This Methanothermobacter thermautotrophicus (strain ATCC 29096 / DSM 1053 / JCM 10044 / NBRC 100330 / Delta H) (Methanobacterium thermoautotrophicum) protein is Elongation factor 1-alpha.